The primary structure comprises 214 residues: Protein DEHYDRATION-INDUCED 19 homolog 5 (214 aa).

Phosphoserine is present on serine 110. Residues 148 to 185 (PKKSKLVQPDSSSEASMEDNSLIRDSTEKDWESPSPLS) are disordered. Polar residues predominate over residues 156–166 (PDSSSEASMED). Over residues 168 to 179 (SLIRDSTEKDWE) the composition is skewed to basic and acidic residues.

This sequence belongs to the Di19 family. Post-translationally, phosphorylated in vitro by CPK3 or CPK11. Expressed in seedlings, roots, leaves, stems, flowers and siliques.

It is found in the nucleus. The protein is Protein DEHYDRATION-INDUCED 19 homolog 5 (DI19-5) of Arabidopsis thaliana (Mouse-ear cress).